The chain runs to 300 residues: Ribokinase (300 aa).

Substrate contacts are provided by residues 11–13, 39–43, and Glu-139; these read SMD and GKGAN. ATP is bound by residues Asn-183 and 210-215; that span reads TLGSEG. K(+) is bound by residues Asp-236 and Thr-238. 241 to 242 contacts ATP; the sequence is GD. Asp-242 serves as a coordination point for substrate. Asp-242 acts as the Proton acceptor in catalysis. K(+)-binding residues include Ser-272, Lys-275, and Gly-277.

It belongs to the carbohydrate kinase PfkB family. Ribokinase subfamily. In terms of assembly, homodimer. The cofactor is Mg(2+).

It is found in the cytoplasm. The enzyme catalyses D-ribose + ATP = D-ribose 5-phosphate + ADP + H(+). Its pathway is carbohydrate metabolism; D-ribose degradation; D-ribose 5-phosphate from beta-D-ribopyranose: step 2/2. With respect to regulation, activated by a monovalent cation that binds near, but not in, the active site. The most likely occupant of the site in vivo is potassium. Ion binding induces a conformational change that may alter substrate affinity. Functionally, catalyzes the phosphorylation of ribose at O-5 in a reaction requiring ATP and magnesium. The resulting D-ribose-5-phosphate can then be used either for sythesis of nucleotides, histidine, and tryptophan, or as a component of the pentose phosphate pathway. This Lactococcus lactis subsp. lactis (strain IL1403) (Streptococcus lactis) protein is Ribokinase.